The primary structure comprises 466 residues: Asparagine--tRNA ligase (466 aa).

This sequence belongs to the class-II aminoacyl-tRNA synthetase family. In terms of assembly, homodimer.

It localises to the cytoplasm. It catalyses the reaction tRNA(Asn) + L-asparagine + ATP = L-asparaginyl-tRNA(Asn) + AMP + diphosphate + H(+). This is Asparagine--tRNA ligase from Sodalis glossinidius (strain morsitans).